The sequence spans 214 residues: Coiled-coil domain-containing protein 169 (214 aa).

A coiled-coil region spans residues 56-138 (SEWKTRYETQ…YAFRLEQESK (83 aa)). The interval 154-214 (MTQVSGSNQV…RSNHLPKLNP (61 aa)) is disordered. 2 stretches are compositionally biased toward polar residues: residues 155-166 (TQVSGSNQVSKR) and 185-195 (HNSMNQKTTNA).

It belongs to the CCDC169 family.

This chain is Coiled-coil domain-containing protein 169 (Ccdc169), found in Mus musculus (Mouse).